The sequence spans 235 residues: Leucyl/phenylalanyl-tRNA--protein transferase (235 aa).

Belongs to the L/F-transferase family.

It is found in the cytoplasm. The enzyme catalyses N-terminal L-lysyl-[protein] + L-leucyl-tRNA(Leu) = N-terminal L-leucyl-L-lysyl-[protein] + tRNA(Leu) + H(+). The catalysed reaction is N-terminal L-arginyl-[protein] + L-leucyl-tRNA(Leu) = N-terminal L-leucyl-L-arginyl-[protein] + tRNA(Leu) + H(+). It carries out the reaction L-phenylalanyl-tRNA(Phe) + an N-terminal L-alpha-aminoacyl-[protein] = an N-terminal L-phenylalanyl-L-alpha-aminoacyl-[protein] + tRNA(Phe). In terms of biological role, functions in the N-end rule pathway of protein degradation where it conjugates Leu, Phe and, less efficiently, Met from aminoacyl-tRNAs to the N-termini of proteins containing an N-terminal arginine or lysine. In Azoarcus sp. (strain BH72), this protein is Leucyl/phenylalanyl-tRNA--protein transferase.